Reading from the N-terminus, the 539-residue chain is GMP synthase [glutamine-hydrolyzing] (539 aa).

The region spanning 4-202 (KILILDFGSQ…VLDIAGAKPD (199 aa)) is the Glutamine amidotransferase type-1 domain. Cysteine 81 serves as the catalytic Nucleophile. Active-site residues include histidine 176 and glutamate 178. The region spanning 203 to 395 (WIMRDHIEEA…LGLPAEMVYR (193 aa)) is the GMPS ATP-PPase domain. 230 to 236 (SGGVDSS) provides a ligand contact to ATP.

In terms of assembly, homodimer.

The catalysed reaction is XMP + L-glutamine + ATP + H2O = GMP + L-glutamate + AMP + diphosphate + 2 H(+). It functions in the pathway purine metabolism; GMP biosynthesis; GMP from XMP (L-Gln route): step 1/1. Catalyzes the synthesis of GMP from XMP. The protein is GMP synthase [glutamine-hydrolyzing] of Burkholderia pseudomallei (strain 1106a).